The sequence spans 1042 residues: Probable inorganic carbon transporter subunit DabA (1042 aa).

The Zn(2+) site is built by C462, D464, H721, and C736.

This sequence belongs to the inorganic carbon transporter (TC 9.A.2) DabA family. As to quaternary structure, forms a complex with DabB. Zn(2+) is required as a cofactor.

The protein resides in the cell inner membrane. Its function is as follows. Part of an energy-coupled inorganic carbon pump. This is Probable inorganic carbon transporter subunit DabA from Nitrosomonas eutropha (strain DSM 101675 / C91 / Nm57).